Consider the following 672-residue polypeptide: SHC SH2 domain-binding protein 1 (672 aa).

Ala2 carries the N-acetylalanine modification. Ser5 is subject to Phosphoserine. A Phosphothreonine modification is found at Thr7. 5 positions are modified to phosphoserine: Ser31, Ser42, Ser44, Ser47, and Ser273. 5 PbH1 repeats span residues 428–451, 452–473, 474–496, 497–518, and 526–548; these read GADIKISGIKFVQHDAVEGILIVH, RGKTTLENCVLQCETTGVTVRT, SAEFLMKNSDLYGAKGAGIEIYP, GSQCTLSDNGIHHCKEGILIKD, and IPKISMVNNIIHNNEGYGVVLVK. The residue at position 634 (Ser634) is a Phosphoserine.

As to quaternary structure, interacts directly with isoform p52shc of SHC1 via its SH2 domain. Interacts with TRIM71; leading to enhanced SHCBP1 protein stability. Interacts with both members of the centralspindlin complex, KIF23 and RACGAP1.

Its subcellular location is the midbody. It is found in the cytoplasm. The protein localises to the cytoskeleton. The protein resides in the spindle. May play a role in signaling pathways governing cellular proliferation, cell growth and differentiation. May be a component of a novel signaling pathway downstream of Shc. Acts as a positive regulator of FGF signaling in neural progenitor cells. This Homo sapiens (Human) protein is SHC SH2 domain-binding protein 1 (SHCBP1).